The chain runs to 265 residues: MLIWSPKGRAAAGVVASVLFIVFFFLPLAVILMSSLSQQWNGILPSGFTLNHFVNALHGAAWDALLASLTIGFCASLFALLCGVWAALALRQYGVKTQKWLSMVFYLPSAIPSVSVGLGILVAFSQGPLQMNGTLWIVLTAHFVLISAFTFSNVSTGLARISADIENVASSLGASPWYRLRHVTLPLLMPWMMSALALSLSLSMGELGATMMIYPPGWTTLPVAIFSLTDRGNIADGAALTIVLVAITLLLMMKLERIAKRLGQK.

A run of 6 helical transmembrane segments spans residues 13–33, 69–89, 104–124, 131–151, 185–205, and 233–253; these read GVVA…VILM, LTIG…AALA, VFYL…LVAF, MNGT…AFTF, LPLL…LSMG, and NIAD…LLMM. Residues 65–253 enclose the ABC transmembrane type-1 domain; that stretch reads LLASLTIGFC…LVAITLLLMM (189 aa).

Belongs to the binding-protein-dependent transport system permease family.

Its subcellular location is the cell inner membrane. Functionally, probably part of the PhnSTUV complex (TC 3.A.1.11.5) involved in 2-aminoethylphosphonate import. Probably responsible for the translocation of the substrate across the membrane. The polypeptide is Putative 2-aminoethylphosphonate transport system permease protein PhnV (phnV) (Salmonella typhimurium (strain LT2 / SGSC1412 / ATCC 700720)).